The chain runs to 420 residues: Gamma-glutamyl phosphate reductase (420 aa).

The protein belongs to the gamma-glutamyl phosphate reductase family.

The protein resides in the cytoplasm. The enzyme catalyses L-glutamate 5-semialdehyde + phosphate + NADP(+) = L-glutamyl 5-phosphate + NADPH + H(+). Its pathway is amino-acid biosynthesis; L-proline biosynthesis; L-glutamate 5-semialdehyde from L-glutamate: step 2/2. In terms of biological role, catalyzes the NADPH-dependent reduction of L-glutamate 5-phosphate into L-glutamate 5-semialdehyde and phosphate. The product spontaneously undergoes cyclization to form 1-pyrroline-5-carboxylate. This is Gamma-glutamyl phosphate reductase from Shewanella amazonensis (strain ATCC BAA-1098 / SB2B).